A 1128-amino-acid chain; its full sequence is MDNPPPTGVAPRHLPPGSVHTGKVTASLSHRRPDSVQDAPPAPVPHRAHGRLREVPHIAGLVLGVFAVACLLWSLSPALRFLTGPPRRFVDDYYFDAPDTNVMWALIVGLLAGAIASRKRIAWWLLVGYLTLFAVANGLRFAAEQNINALVAMIVQVGVVGLLIAAWPEFYTRVRRGAGWKALGVLVGGLAIGCLLGWGLVEVFPGSLPPGWQRPGWAVYRVTAAILVENEHFGGHPRPFVNVLLGLFGAIALLAAVLTLLRSQRAANAMTGLDESAIRGLLEHSDVEDSLGYFATRRDKAVVFAPSGKAAVTYRVELGVCLASGDPVGVREAWPHAIDAWLRLADRFGWTPAVMGASEEGATAYRRAGLSALRLGDEAVLDTRDFSLAGPELRQVRQAANRLRKQGVRVRIRRHREIPSAEFEQIMARADAWRDTETERGFSMALGRLGDPLDADCLLVEAVAADDRVLGMLSLVPWGRTGVSLELMRRDPQGPNGVMELMISQLALNSEQFGITRVSLNFAVFRSVFEEGGRIGAGPVLRLWRGVLLFFSRWWQLEALYRSNVKYQPDWVPRFFLFEERRQLPRVAVASALAEGFLPRLGKDPDASAHTGAQSAVPDTLTGLHADGSPPDWPKPDLLDSGPRRPEQVRVRMAKLDRMTAAGVDAYPVAYPPTHTVAAARRSPRGTTVRVCGRLLRIRDYGGVVFALLRDWSDDIQLVIDRERVGAARSAEFGEYFDLGDLIEVSGQIGRSRSGELSLLAADWRMLGKCLHPLPDKWKGLADPEARVRQRYVDMAINPETRDVLAKRSAVVRSLRESLNSWGYLEVETPILQQVHGGANATPFTTHINAYDLDLYLRIAPELYLKRLCVGGMEKVFELGRTFRNEGVDFSHNPEFTILEAYEAHSDYIRMMHTCRVLIQNAALAANGSMVAMRPGADGALEPVDISGDWPVKTVHGAVSAAVGTEITPRTGVAELRELCDRVGVPYQHGWDEGQIVLEMYEHLVEARTEEPTFYVDFPTSVSPLTRAHRSTPGVTERWDLVAWGVELGTAYSELTDPVEQRRRLTEQSVLAANGDPEAMELDEDFLQALEHAMPPTGGLGMGVDRIVMLITGRSIRETLPFPLVKPR.

The disordered stretch occupies residues 1 to 47 (MDNPPPTGVAPRHLPPGSVHTGKVTASLSHRRPDSVQDAPPAPVPHR). Residues 1–632 (MDNPPPTGVA…GLHADGSPPD (632 aa)) form a phosphatidylglycerol lysyltransferase region. Helical transmembrane passes span 55–75 (VPHIAGLVLGVFAVACLLWSL), 97–117 (APDTNVMWALIVGLLAGAIAS), 121–141 (IAWWLLVGYLTLFAVANGLRF), 147–167 (INALVAMIVQVGVVGLLIAAW), 184–204 (GVLVGGLAIGCLLGWGLVEVF), and 240–260 (FVNVLLGLFGAIALLAAVLTL). The interval 619–644 (DTLTGLHADGSPPDWPKPDLLDSGPR) is disordered. A lysine--tRNA ligase region spans residues 633 to 1128 (WPKPDLLDSG…TLPFPLVKPR (496 aa)). Over residues 634 to 644 (PKPDLLDSGPR) the composition is skewed to basic and acidic residues. Residues D1040 and E1047 each coordinate Mg(2+).

The protein in the N-terminal section; belongs to the LPG synthetase family. It in the C-terminal section; belongs to the class-II aminoacyl-tRNA synthetase family. It depends on Mg(2+) as a cofactor.

The protein localises to the cell membrane. It catalyses the reaction tRNA(Lys) + L-lysine + ATP = L-lysyl-tRNA(Lys) + AMP + diphosphate. The enzyme catalyses L-lysyl-tRNA(Lys) + a 1,2-diacyl-sn-glycero-3-phospho-(1'-sn-glycerol) = a 1,2-diacyl-sn-glycero-3-phospho-1'-(3'-O-L-lysyl)-sn-glycerol + tRNA(Lys). Its function is as follows. Catalyzes the production of L-lysyl-tRNA(Lys)transfer and the transfer of a lysyl group from L-lysyl-tRNA(Lys) to membrane-bound phosphatidylglycerol (PG), which produces lysylphosphatidylglycerol (LPG), one of the components of the bacterial membrane with a positive net charge. LPG synthesis contributes to the resistance to cationic antimicrobial peptides (CAMPs) and likely protects M.tuberculosis against the CAMPs produced by competiting microorganisms (bacteriocins). In fact, the modification of anionic phosphatidylglycerol with positively charged L-lysine results in repulsion of the peptides. This is Lysylphosphatidylglycerol biosynthesis bifunctional protein LysX (lysX) from Nocardia farcinica (strain IFM 10152).